Reading from the N-terminus, the 212-residue chain is Probable nicotinate-nucleotide adenylyltransferase (212 aa).

It belongs to the NadD family.

It carries out the reaction nicotinate beta-D-ribonucleotide + ATP + H(+) = deamido-NAD(+) + diphosphate. Its pathway is cofactor biosynthesis; NAD(+) biosynthesis; deamido-NAD(+) from nicotinate D-ribonucleotide: step 1/1. Functionally, catalyzes the reversible adenylation of nicotinate mononucleotide (NaMN) to nicotinic acid adenine dinucleotide (NaAD). This chain is Probable nicotinate-nucleotide adenylyltransferase, found in Saccharopolyspora erythraea (strain ATCC 11635 / DSM 40517 / JCM 4748 / NBRC 13426 / NCIMB 8594 / NRRL 2338).